Reading from the N-terminus, the 122-residue chain is Ribosome-binding factor A (122 aa).

It belongs to the RbfA family. Monomer. Binds 30S ribosomal subunits, but not 50S ribosomal subunits or 70S ribosomes.

It is found in the cytoplasm. Its function is as follows. One of several proteins that assist in the late maturation steps of the functional core of the 30S ribosomal subunit. Associates with free 30S ribosomal subunits (but not with 30S subunits that are part of 70S ribosomes or polysomes). Required for efficient processing of 16S rRNA. May interact with the 5'-terminal helix region of 16S rRNA. The sequence is that of Ribosome-binding factor A from Syntrophomonas wolfei subsp. wolfei (strain DSM 2245B / Goettingen).